The primary structure comprises 127 residues: Large ribosomal subunit protein bL20 (127 aa).

Belongs to the bacterial ribosomal protein bL20 family.

Functionally, binds directly to 23S ribosomal RNA and is necessary for the in vitro assembly process of the 50S ribosomal subunit. It is not involved in the protein synthesizing functions of that subunit. This Corynebacterium jeikeium (strain K411) protein is Large ribosomal subunit protein bL20.